Consider the following 894-residue polypeptide: Protein NLP9 (894 aa).

The RWP-RK domain occupies 517–603 (QEISGARRLE…LDSVQGVEGG (87 aa)). A coiled-coil region spans residues 578–598 (RKINKVNRSLRKIQTVLDSVQ). The tract at residues 732-763 (NTRIERGNGTVEPNHSISSSMSDSSNSSGAVL) is disordered. Positions 747 to 763 (SISSSMSDSSNSSGAVL) are enriched in low complexity. The PB1 domain occupies 792-875 (TLTVKATYRE…HTVKFLVRDI (84 aa)).

Its subcellular location is the nucleus. In terms of biological role, probable transcription factor. This chain is Protein NLP9 (NLP9), found in Arabidopsis thaliana (Mouse-ear cress).